The following is a 121-amino-acid chain: uncharacterized protein (121 aa).

The N-terminal stretch at 1-23 (MNFSTVFQAIIAVLGLTTVTALA) is a signal peptide. N-linked (GlcNAc...) asparagine glycosylation is found at Asn68 and Asn84.

In terms of processing, N-glycosylated.

This is an uncharacterized protein from Saccharomyces cerevisiae (strain ATCC 204508 / S288c) (Baker's yeast).